The sequence spans 422 residues: Cyclin-A2 (422 aa).

Methionine 1 is subject to N-acetylmethionine. The disordered stretch occupies residues 1 to 62 (MPGTSRHSGR…APQQKLKTRR (62 aa)). The residue at position 5 (serine 5) is a Phosphoserine.

It belongs to the cyclin family. Cyclin AB subfamily. In terms of assembly, interacts with the CDK1 and CDK2 protein kinases to form serine/threonine kinase holoenzyme complexes. Interacts with CDK1 (hyperphosphorylated form in G1 and underphosphorylated forms in S and G2). Interacts with CDK2; the interaction increases from G1 to G2. Interacts (associated with CDK2 but not with CDK1) with SCAPER; regulates the activity of CCNA2/CDK2 by transiently maintaining CCNA2 in the cytoplasm. Forms a ternary complex with CDK2 and CDKN1B; CDKN1B inhibits the kinase activity of CDK2 through conformational rearrangements. Interacts with INCA1. (Microbial infection) Interacts with mouse cytomegalovirus/MCMV kinase M97; this interaction sequesters CCNA2 to the cytoplasm. Polyubiquitinated via 'Lys-11'-linked ubiquitin by the anaphase-promoting complex (APC/C), leading to its degradation by the proteasome. Deubiquitinated and stabilized by USP37 enables entry into S phase. Ubiquitinated during the G1 phase by the SCF(FBXO31) complex, leading to its proteasomal degradation. As to expression, ubiquitous. In the testis, expressed in germ cells and in the ovary, in both germline and somatic cells.

It is found in the nucleus. Its subcellular location is the cytoplasm. Its function is as follows. Cyclin which controls both the G1/S and the G2/M transition phases of the cell cycle. Functions through the formation of specific serine/threonine kinase holoenzyme complexes with the cyclin-dependent protein kinases CDK1 and CDK2. The cyclin subunit confers the substrate specificity of these complexes and differentially interacts with and activates CDK1 and CDK2 throughout the cell cycle. The sequence is that of Cyclin-A2 from Mus musculus (Mouse).